We begin with the raw amino-acid sequence, 501 residues long: Dynein regulatory complex subunit 5 (501 aa).

The segment covering 1–23 (MQDTVTTSALLDPSHSSVSTQDN) has biased composition (polar residues). Disordered regions lie at residues 1–56 (MQDT…HPRA) and 202–222 (LPAQ…EMEE). A compositionally biased stretch (low complexity) spans 24-34 (SSTGGHTSSTS). 5 LRR repeats span residues 308–321 (VLEE…LIGD), 335–355 (RLRV…QSLA), 363–383 (NLIS…QALA), 391–411 (CLTT…TLLS), and 419–439 (TLTS…KQLL).

The protein belongs to the DRC5 family. Component of the nexin-dynein regulatory complex (N-DRC). Interacts with DRC1. Interacts with FBXL13/DRC6, DRC3 and DRC7.

The protein resides in the cell projection. It localises to the cilium. Its subcellular location is the flagellum. It is found in the cytoplasm. The protein localises to the cytoskeleton. The protein resides in the flagellum axoneme. Functionally, component of the nexin-dynein regulatory complex (N-DRC) a key regulator of ciliary/flagellar motility which maintains the alignment and integrity of the distal axoneme and regulates microtubule sliding in motile axonemes. May play a role in the assembly of N-DRC. May be required for sperm motility. This chain is Dynein regulatory complex subunit 5 (TCTE1), found in Homo sapiens (Human).